The sequence spans 352 residues: MASSINGRKPSEIFKAQALLYKHIYAFIDSMSLKWAVEMNIPNIIQNHGKPISLSNLVSILQVPSSKIGNVRRLMRYLAHNGFFEIITKEEESYALTVASELLVRGSDLCLAPMVECVLDPTLSGSYHELKKWIYEEDLTLFGVTLGSGFWDFLDKNPEYNTSFNDAMASDSKLINLALRDCDFVFDGLESIVDVGGGTGTTAKIICETFPKLKCIVFDRPQVVENLSGSNNLTYVGGDMFTSIPNADAVLLKYILHNWTDKDCLRILKKCKEAVTNDGKRGKVTIIDMVIDEKKDENQVTQIKLLMDVNMACLNGKERNEEEWKKLFIEAGFQHYKISPLTGFLSLIEIYP.

118–127 (VLDPTLSGSY) serves as a coordination point for substrate. Residues Gly-196, Asp-219, Asp-239, Met-240, and Lys-253 each coordinate S-adenosyl-L-methionine. The Proton acceptor role is filled by His-257.

It belongs to the class I-like SAM-binding methyltransferase superfamily. Cation-independent O-methyltransferase family. COMT subfamily. In terms of assembly, homodimer.

The enzyme catalyses a 7-hydroxyisoflavone + S-adenosyl-L-methionine = a 7-methoxyisoflavone + S-adenosyl-L-homocysteine + H(+). Its pathway is phytoalexin biosynthesis; medicarpin biosynthesis. Its function is as follows. Transfers a methyl group to 7-hydroxyls of the isoflavones daidzein, genistein and 6,7,4'-trihydroxyisoflavone. Can also methylate (+)6a-hydroxymaackiain with lower efficiency. The sequence is that of Isoflavone-7-O-methyltransferase 6 from Medicago sativa (Alfalfa).